The sequence spans 432 residues: Alpha-2 adrenergic receptor (432 aa).

Topologically, residues 1-32 (MDPLNATGMDAFTAIHLNASWSADSGYSLAAI) are extracellular. 2 N-linked (GlcNAc...) asparagine glycosylation sites follow: Asn-5 and Asn-18. Residues 33-57 (ASIAALVSFLILFTVVGNILVVIAV) traverse the membrane as a helical segment. Over 58 to 69 (LTSRALKAPQNL) the chain is Cytoplasmic. Residues 70–95 (FLVSLATADILVATLVMPFSLANELM) form a helical membrane-spanning segment. Residues 96–105 (GYWYFGKVWC) lie on the Extracellular side of the membrane. Cys-105 and Cys-183 are disulfide-bonded. Residues 106–128 (GIYLALDVLFCTSSIVHLCAISL) form a helical membrane-spanning segment. Topologically, residues 129–149 (DRYWSVTQAVEYNLKRTPKRV) are cytoplasmic. A helical transmembrane segment spans residues 150–172 (KCIIVIVWLISAFISSPPLLSID). Topologically, residues 173-188 (SNNYISSQPQCMLNDD) are extracellular. A helical membrane pass occupies residues 189 to 212 (TWYILSSSMASFFAPCLIMILVYI). Over 213–356 (RIYQVAKTRT…QAREKRFTFV (144 aa)) the chain is Cytoplasmic. Residues 222–319 (TRSMSGKEPR…SISKQSARIS (98 aa)) are disordered. Polar residues-rich tracts occupy residues 235 to 246 (VTQTENGLNKAN) and 265 to 275 (SQRTVTIGQQT). A compositionally biased stretch (basic and acidic residues) spans 288–300 (GKGHKPQRQDSQR). Polar residues predominate over residues 309–319 (SSISKQSARIS). Residues 357-380 (LAVVMGVFVVCWFPFFFSYSLHAV) form a helical membrane-spanning segment. Topologically, residues 381–393 (CRDYCKIPDTLFK) are extracellular. Residues 394–413 (FFWIGYCNSSLNPAIYTIFN) form a helical membrane-spanning segment. At 414 to 432 (RDFRRAFQKILCKSWKKSF) the chain is on the cytoplasmic side.

It belongs to the G-protein coupled receptor 1 family.

The protein resides in the cell membrane. Alpha-2 adrenergic receptors mediate the catecholamine-induced inhibition of adenylate cyclase through the action of G proteins. This chain is Alpha-2 adrenergic receptor, found in Labrus ossifagus (Cuckoo wrasse).